A 65-amino-acid chain; its full sequence is Metallothionein-like protein 3B (65 aa).

This sequence belongs to the metallothionein superfamily. Type 15 family. In terms of tissue distribution, expressed in leaves and rachis.

Functionally, metallothioneins have a high content of cysteine residues that bind various heavy metals. The chain is Metallothionein-like protein 3B (MT3B) from Oryza sativa subsp. japonica (Rice).